Consider the following 74-residue polypeptide: Translation initiation factor IF-1 2 (74 aa).

The 73-residue stretch at 1–73 folds into the S1-like domain; that stretch reads MTKNKNVIEV…TRGRIVFRYR (73 aa).

It belongs to the IF-1 family. As to quaternary structure, component of the 30S ribosomal translation pre-initiation complex which assembles on the 30S ribosome in the order IF-2 and IF-3, IF-1 and N-formylmethionyl-tRNA(fMet); mRNA recruitment can occur at any time during PIC assembly.

It is found in the cytoplasm. In terms of biological role, one of the essential components for the initiation of protein synthesis. Stabilizes the binding of IF-2 and IF-3 on the 30S subunit to which N-formylmethionyl-tRNA(fMet) subsequently binds. Helps modulate mRNA selection, yielding the 30S pre-initiation complex (PIC). Upon addition of the 50S ribosomal subunit IF-1, IF-2 and IF-3 are released leaving the mature 70S translation initiation complex. The polypeptide is Translation initiation factor IF-1 2 (Streptomyces avermitilis (strain ATCC 31267 / DSM 46492 / JCM 5070 / NBRC 14893 / NCIMB 12804 / NRRL 8165 / MA-4680)).